The chain runs to 422 residues: Phagosome assembly factor 1 (422 aa).

It belongs to the PHAF1 family. Interacts with BCAS3; the interaction is requrired for the association with the phagophore.

Its subcellular location is the cytoplasm. It is found in the preautophagosomal structure. Its function is as follows. Plays a regulatory role in autophagic activity. In complex with BCAS3, associates with the autophagosome formation site during both non-selective and selective autophagy. In Homo sapiens (Human), this protein is Phagosome assembly factor 1.